The following is a 382-amino-acid chain: Guanine nucleotide exchange factor for Rab-3A (382 aa).

Residues 1–17 (MWSGPPQPDQGLPPPLA) are compositionally biased toward pro residues. Residues 1 to 60 (MWSGPPQPDQGLPPPLAAVPVPWKSTDPCQGHRESPGALVETSAGEEAQGQEGPAAAQLD) form a disordered region. Residues 45-58 (GEEAQGQEGPAAAQ) are compositionally biased toward low complexity. The stretch at 73 to 161 (EKGSEFLKEE…AEVTALKTLV (89 aa)) forms a coiled coil. A disordered region spans residues 166–198 (PASPNRELHPQLLSPTKAGPRKGHSRHKSTSST). Phosphoserine occurs at positions 168 and 179. Positions 184-194 (GPRKGHSRHKS) are enriched in basic residues.

The protein belongs to the SEC2 family. As to quaternary structure, interacts with RAB3A and IHPK1 through the coiled-coil domain. This interaction is competitive. IHPK1 kinase activity is not required for this interaction.

In terms of biological role, guanine nucleotide exchange factor (GEF) which may activate RAB3A, a GTPase that regulates synaptic vesicle exocytosis. Promotes the exchange of GDP to GTP, converting inactive GDP-bound Rab proteins into their active GTP-bound form. May also activate RAB8A and RAB8B. This chain is Guanine nucleotide exchange factor for Rab-3A (RAB3IL1), found in Homo sapiens (Human).